Consider the following 247-residue polypeptide: Adenosylcobinamide-GDP ribazoletransferase (247 aa).

The next 6 helical transmembrane spans lie at 34-54, 59-79, 113-133, 138-158, 171-193, and 197-219; these read IVMF…IFIL, CGIP…TGGF, GGLA…ELAL, MLAA…LLMY, VFIG…IIAT, and PGMQ…GQLL.

The protein belongs to the CobS family. Mg(2+) is required as a cofactor.

It localises to the cell inner membrane. It catalyses the reaction alpha-ribazole + adenosylcob(III)inamide-GDP = adenosylcob(III)alamin + GMP + H(+). It carries out the reaction alpha-ribazole 5'-phosphate + adenosylcob(III)inamide-GDP = adenosylcob(III)alamin 5'-phosphate + GMP + H(+). It participates in cofactor biosynthesis; adenosylcobalamin biosynthesis; adenosylcobalamin from cob(II)yrinate a,c-diamide: step 7/7. Joins adenosylcobinamide-GDP and alpha-ribazole to generate adenosylcobalamin (Ado-cobalamin). Also synthesizes adenosylcobalamin 5'-phosphate from adenosylcobinamide-GDP and alpha-ribazole 5'-phosphate. This chain is Adenosylcobinamide-GDP ribazoletransferase, found in Salmonella newport (strain SL254).